The sequence spans 172 residues: Peptide deformylase (172 aa).

Fe cation contacts are provided by cysteine 92 and histidine 134. Residue glutamate 135 is part of the active site. Histidine 138 lines the Fe cation pocket.

The protein belongs to the polypeptide deformylase family. It depends on Fe(2+) as a cofactor.

The catalysed reaction is N-terminal N-formyl-L-methionyl-[peptide] + H2O = N-terminal L-methionyl-[peptide] + formate. Removes the formyl group from the N-terminal Met of newly synthesized proteins. Requires at least a dipeptide for an efficient rate of reaction. N-terminal L-methionine is a prerequisite for activity but the enzyme has broad specificity at other positions. The sequence is that of Peptide deformylase from Saccharophagus degradans (strain 2-40 / ATCC 43961 / DSM 17024).